The sequence spans 280 residues: 4-deoxy-L-threo-5-hexosulose-uronate ketol-isomerase (280 aa).

Residues histidine 198, histidine 200, glutamate 205, and histidine 247 each contribute to the Zn(2+) site.

This sequence belongs to the KduI family. Requires Zn(2+) as cofactor.

It carries out the reaction 5-dehydro-4-deoxy-D-glucuronate = 3-deoxy-D-glycero-2,5-hexodiulosonate. It functions in the pathway glycan metabolism; pectin degradation; 2-dehydro-3-deoxy-D-gluconate from pectin: step 4/5. Its function is as follows. Catalyzes the isomerization of 5-dehydro-4-deoxy-D-glucuronate to 3-deoxy-D-glycero-2,5-hexodiulosonate. This is 4-deoxy-L-threo-5-hexosulose-uronate ketol-isomerase from Bacteroides fragilis (strain ATCC 25285 / DSM 2151 / CCUG 4856 / JCM 11019 / LMG 10263 / NCTC 9343 / Onslow / VPI 2553 / EN-2).